The primary structure comprises 186 residues: Elongation factor P (186 aa).

Belongs to the elongation factor P family.

The protein resides in the cytoplasm. Its pathway is protein biosynthesis; polypeptide chain elongation. Its function is as follows. Involved in peptide bond synthesis. Stimulates efficient translation and peptide-bond synthesis on native or reconstituted 70S ribosomes in vitro. Probably functions indirectly by altering the affinity of the ribosome for aminoacyl-tRNA, thus increasing their reactivity as acceptors for peptidyl transferase. The polypeptide is Elongation factor P (Streptococcus gordonii (strain Challis / ATCC 35105 / BCRC 15272 / CH1 / DL1 / V288)).